Here is a 492-residue protein sequence, read N- to C-terminus: GPI alpha-1,6-mannosyltransferase 2 (492 aa).

Residues 1–13 (MGLLDPSQKEVLK) lie on the Cytoplasmic side of the membrane. Residues 14–34 (FAVSCRILTLVLQALFNIIIP) form a helical membrane-spanning segment. Residues 35–77 (DHHADAFSPPRLAPSGSVDQLVEALLGGLSRWDAEHFLFIAEH) are Lumenal-facing. The helical transmembrane segment at 78–98 (GYLYEHNFAFFPGFPLALLMG) threads the bilayer. The Cytoplasmic segment spans residues 99 to 113 (TELLRPLQGLLSERS). Residues 114-134 (CLLVSVALLNSLFSVLAAVAL) form a helical membrane-spanning segment. Residues 135-136 (HD) are Lumenal-facing. A helical membrane pass occupies residues 137-157 (LGCLVLHCPRQAFCAALLFCL). Over 158–161 (SPAN) the chain is Cytoplasmic. The helical transmembrane segment at 162 to 182 (VFLAAGYSEALFAFLTFSAMG) threads the bilayer. Residues 183-192 (QLERGRGWAS) are Lumenal-facing. The chain crosses the membrane as a helical span at residues 193–213 (GLLFALAAGVRSNGLVSVGFL). The Cytoplasmic segment spans residues 214 to 234 (LHSQCRGFCSSLVVLDPLKGL). Residues 235-255 (VKLMASLCLSVLTVSLPFALF) traverse the membrane as a helical segment. Residues 256 to 327 (QYYAYTQFCF…RYYELRQVPN (72 aa)) are Lumenal-facing. The helical transmembrane segment at 328 to 348 (FLLATPVTVLVVWATWTYVTA) threads the bilayer. At 349–378 (HPWLCLTLGLQRTKDRESLEKPHPGFLSAK) the chain is on the cytoplasmic side. Residues 379–399 (VFVYLVHAAALLAFGGLCMHV) traverse the membrane as a helical segment. Over 400–468 (QVLTRLLGSS…NWKTCSPVTK (69 aa)) the chain is Lumenal. The chain crosses the membrane as a helical span at residues 469 to 489 (CILVYFLTYWLLGLIMHCNFL). Residues 490–492 (PWT) lie on the Cytoplasmic side of the membrane.

The protein belongs to the PIGV family. In terms of processing, not N-glycosylated.

It localises to the endoplasmic reticulum membrane. The protein operates within glycolipid biosynthesis; glycosylphosphatidylinositol-anchor biosynthesis. Alpha-1,6-mannosyltransferase that catalyzes the transfer of the second mannose, via an alpha-1,6 bond, from a dolichol-phosphate-mannose (Dol-P-Man) to the alpha-D-Man-(1-&gt;4)-alpha-D-GlcN-(1-&gt;6)-(1-radyl,2-acyl-sn-glycero-3-phospho)-2-acyl-inositol (also termed H2) intermediate to generate an alpha-D-Man-(1-&gt;6)-alpha-D-Man-(1-&gt;4)-alpha-D-GlcN-(1-&gt;6)-(1-radyl,2-acyl-sn-glycero-3-phospho)-2-acyl-inositol (also termed H3) and participates in the seventh step of the glycosylphosphatidylinositol-anchor biosynthesis. Also transfers the second mannose on a 2-PEtn-alpha-D-Man-(1-&gt;4)-alpha-D-GlcN-(1-&gt;6)-(1-radyl,2-acyl-sn-glycero-3-phospho)-2-acyl-inositol (also termed H5). This Rattus norvegicus (Rat) protein is GPI alpha-1,6-mannosyltransferase 2.